The sequence spans 64 residues: Drosocin antimicrobial peptides (64 aa).

A signal peptide spans 1–19 (MKFTIVFLLLACVFAMAVA). Positions 20 to 21 (TP) are excised as a propeptide. O-linked (GalNAc...) serine glycosylation occurs at Ser28. Residue Thr32 is glycosylated (O-linked (GalNAc...) threonine). The interval 32–40 (TSHPRPIRV) is critical for inhibition of translation, possibly due to its role in mediating interactions with bacterial 23S rRNA and peptide chain release factors.

The protein belongs to the drosocin family. As to quaternary structure, associates with the bacterial 50S ribosomal complex, occupying the nascent peptide exit tunnel. Interacts with bacterial 23S rRNA; this interaction is direct. Interacts with bacterial rplV/50S ribosomal protein L22; this interaction is direct. Interacts with bacterial prfA/peptide chain release factor RF1; while associated with the bacterial 50S ribosomal complex, this interaction is direct and traps RF1 on the ribosome, inhibiting further translation. Post-translationally, proteolytically cleaved at a pair of basic residues corresponding to the RXK/RR optimal cleavage site for furin proteases to produce two distinct antibacterial peptides. In terms of processing, O-glycosylated. O-glycosylation may be required for efficient uptake by target bacterial cells. Monosaccharide modification of Thr-32 provides better antibacterial activity than disaccharide modification or no modification. O-glycosylation of Thr-32 is not essential for antimicrobial activity but enhances this activity by mediating interactions with the 23S rRNA and increasing the efficiency of translation inhibition.

Its subcellular location is the secreted. Its function is as follows. Antibacterial peptide with strong anti-Gram-negative bacteria activity. Significantly contributes to antibacterial activity against Enterobacter cloacae but not Providencia burhodogranariea. Inhibitor of bacterial translation machinery that targets translation termination in a prfA- or prfB-dependent manner. Binds within the nascent peptide exit tunnel of the bacterial large ribosomal subunit, potentially interfering with nascent chain translocation that occurs post-peptide bond formation. Binds prfA/RF1 (and potentially prfB/RF2), trapping it on the ribosome after release of the nascent polypeptide chain and preventing further translation. The resulting depletion of peptide chain release factors further disrupts bacterial translation by preventing ribosomal peptide chain release and inducing stop codon readthrough. Entry into target Escherichia coli cells requires the bacterial peptide antibiotic transporter sbmA. Functionally, peptide with significant antibacterial activity against Providencia burhodogranariea but not Enterobacter cloacae. The chain is Drosocin antimicrobial peptides (Dro) from Drosophila simulans (Fruit fly).